Here is a 657-residue protein sequence, read N- to C-terminus: Tyrosine-protein phosphatase vhp-1 (657 aa).

In terms of domain architecture, Rhodanese spans 21-151 (APDTTLVVDC…FAQQYPQLCE (131 aa)). In terms of domain architecture, Tyrosine-protein phosphatase spans 175–318 (GITLITPNIY…LLEYENVLIK (144 aa)). Catalysis depends on C262, which acts as the Phosphocysteine intermediate. Disordered regions lie at residues 353-426 (SNCV…MDLG), 539-563 (VPAGSSSISTPSGSQSTPASASSSA), and 581-657 (PAST…PCHQ). The segment covering 366–405 (SPSSPSVSEGSAASEPETSSSAASSSSTASAPPSMPSTSE) has biased composition (low complexity). A compositionally biased stretch (polar residues) spans 406 to 419 (QGTSSGTVNVNGKR). Composition is skewed to low complexity over residues 542-563 (GSSSISTPSGSQSTPASASSSA) and 581-597 (PASTSTPASSTPGTSRA).

Belongs to the protein-tyrosine phosphatase family. Non-receptor class dual specificity subfamily. As to quaternary structure, may interact with pmk-3. Expressed in the pharynx, intestine, neurons and vulval hypodermal cells.

It catalyses the reaction O-phospho-L-tyrosyl-[protein] + H2O = L-tyrosyl-[protein] + phosphate. Its function is as follows. Acts preferentially on the c-Jun N-terminal kinase (JNK) and p38 MAPKs. Plays an important role in the heavy metal stress response and in axon regeneration by negatively regulating the kgb-1 (JNK-like) and the pmk-1 (p38-type) MAPK signaling pathways. The protein is Tyrosine-protein phosphatase vhp-1 (vhp-1) of Caenorhabditis elegans.